Consider the following 424-residue polypeptide: tRNA(Met) cytidine acetate ligase (424 aa).

ATP is bound by residues 7–20 (ITEYNPFHNGHLHH), Gly-102, Asn-174, and Arg-199.

Belongs to the TmcAL family.

The protein localises to the cytoplasm. The catalysed reaction is cytidine(34) in elongator tRNA(Met) + acetate + ATP = N(4)-acetylcytidine(34) in elongator tRNA(Met) + AMP + diphosphate. Functionally, catalyzes the formation of N(4)-acetylcytidine (ac(4)C) at the wobble position of elongator tRNA(Met), using acetate and ATP as substrates. First activates an acetate ion to form acetyladenylate (Ac-AMP) and then transfers the acetyl group to tRNA to form ac(4)C34. In Alkaliphilus metalliredigens (strain QYMF), this protein is tRNA(Met) cytidine acetate ligase.